We begin with the raw amino-acid sequence, 713 residues long: TWiK family of potassium channels protein 12 (713 aa).

At 1-15 (MTLFKKIQWFCNLIR) the chain is on the cytoplasmic side. A helical transmembrane segment spans residues 16-36 (LRSYYKFLLLIAYTAFGAWLF). Residues asparagine 53, asparagine 77, and asparagine 98 are each glycosylated (N-linked (GlcNAc...) asparagine). Positions 112-132 (WTWTGAMFYAGQLYTTIGYGY) form an intramembrane region, pore-forming. A helical membrane pass occupies residues 142-162 (ICTIFYALFGIPCFLMYLKIE). Residues 163 to 242 (NAIEWKKDKQ…AEERKKKPFP (80 aa)) lie on the Cytoplasmic side of the membrane. A helical transmembrane segment spans residues 243-263 (IPIAIIMLIIWICFSASMFCI). The pore-forming intramembrane region spans 267 to 287 (TWVFSSAVYFFIVSISTVGLG). Residues 298–318 (VFNFLLILVGLALLSMCFELI) form a helical membrane-spanning segment. Residues 319–713 (TDRVAKWKQK…LSKRDASTMA (395 aa)) are Cytoplasmic-facing.

Belongs to the two pore domain potassium channel (TC 1.A.1.8) family.

It is found in the membrane. The chain is TWiK family of potassium channels protein 12 (twk-12) from Caenorhabditis elegans.